Reading from the N-terminus, the 526-residue chain is Maturase K (526 aa).

The protein belongs to the intron maturase 2 family. MatK subfamily.

Its subcellular location is the plastid. The protein localises to the chloroplast. Usually encoded in the trnK tRNA gene intron. Probably assists in splicing its own and other chloroplast group II introns. The chain is Maturase K from Iris pseudacorus (Yellow flag).